The following is a 245-amino-acid chain: Lytic switch protein BZLF1 (245 aa).

The transactivation stretch occupies residues 1–167; the sequence is MMDPNSTSED…RTRKPQQPES (167 aa). A phosphothreonine; by host mark is found at Thr-14 and Thr-159. A Bipartite nuclear localization signal motif is present at residues 157–194; sequence RRTRKPQQPESLEECDSELEIKRYKNRVASRKCRAKFK. 3 positions are modified to phosphoserine; by host: Ser-167, Ser-173, and Ser-186. In terms of domain architecture, bZIP spans 170–228; the sequence is ECDSELEIKRYKNRVASRKCRAKFKQLLQHYREVAAAKSSENDRLRLLLKQMCPSLDVD. The interval 178–195 is basic motif; it reads KRYKNRVASRKCRAKFKQ. Residues 196–228 are leucine-zipper; it reads LLQHYREVAAAKSSENDRLRLLLKQMCPSLDVD. The tract at residues 229–245 is accessory activation domain; that stretch reads SIIPRTPDVLHEDLLNF.

This sequence belongs to the bZIP family. In terms of assembly, homodimer. Interacts (via b-ZIP domain) with the DNA polymerase processivity factor BMRF1 (via N-terminus); this interaction may inhibit BZLF1-induced transcription of the BMRF1 promoter. Interacts with human UBN1, CRTC2 and RACK1. Interacts (via N-terminus) with human PAX5 (via N-terminus); this interaction inhibits BZLF1-mediated lytic viral reactivation. Interacts (via leucine-zipper domain) with host CEBPA; this interaction induces G1 host cell cycle arrest. Interacts (via C-terminus) with host TP53BP1 (via C-terminus); this interaction is involved in the activation of the viral lytic cycle. Interacts with host chromatin-remodeling ATPase INO80; this interaction participates to the activation of early lytic viral genes by BZLF1. Interacts with host regulator of chromatin SMARCA5/hSNF2H; this interaction participates to the activation of early lytic viral genes by BZLF1. Interacts with host PLSCR1/Phospholipid scramblase 1; this interaction negatively regulates the transcriptional regulatory activity of BZLF1 by preventing the formation of the BZLF1-CBP complex.

It is found in the host nucleus. Transcription factor that acts as a molecular switch to induce the transition from the latent to the lytic or productive phase of the virus cycle. Mediates the switch from the latent to the lytic cycle of infection in cells containing a highly methylated viral genome. Probably binds to silenced chromatin and recruits host chromatin-remodeling enzymes. Regulates this switch by binding to 2 types of ZEBRA response elements (ZREs): the CpG-free AP-1 like elements (latency) and the methylated CpG-containing elements (lytic replication). Activates preferentially the methylated forms of the viral lytic R (BRLF1) and Na (BRRF1) gene promoters, the latters being the first genes activated during Z-mediated reactivation in latently infected cells. BZLF1 and BRLF1 act together to trigger lytic replication. Also binds the lytic origin of replication, oriLyt. Induces G1 cell cycle arrest by stabilizing the host CCAAT/enhancer binding protein CEBPA. This function is important because the lytic cycle preferentially takes place in host cells arrested in G1. This Epstein-Barr virus (strain B95-8) (HHV-4) protein is Lytic switch protein BZLF1.